The following is a 406-amino-acid chain: Tryptophan synthase beta chain (406 aa).

Position 97 is an N6-(pyridoxal phosphate)lysine (Lys-97).

The protein belongs to the TrpB family. As to quaternary structure, tetramer of two alpha and two beta chains. The cofactor is pyridoxal 5'-phosphate.

It carries out the reaction (1S,2R)-1-C-(indol-3-yl)glycerol 3-phosphate + L-serine = D-glyceraldehyde 3-phosphate + L-tryptophan + H2O. Its pathway is amino-acid biosynthesis; L-tryptophan biosynthesis; L-tryptophan from chorismate: step 5/5. The beta subunit is responsible for the synthesis of L-tryptophan from indole and L-serine. This Lacticaseibacillus paracasei (strain ATCC 334 / BCRC 17002 / CCUG 31169 / CIP 107868 / KCTC 3260 / NRRL B-441) (Lactobacillus paracasei) protein is Tryptophan synthase beta chain.